Consider the following 325-residue polypeptide: NADH-quinone oxidoreductase subunit H (325 aa).

A run of 8 helical transmembrane segments spans residues 5–25, 75–95, 117–137, 157–177, 190–210, 240–260, 268–288, and 305–325; these read LIII…AAAY, FVYW…FVLI, VGVV…VLAG, ISYE…TGTL, WLIW…FAET, FFLG…TLFF, DIPI…FMWV, and WKVL…FTLV.

Belongs to the complex I subunit 1 family. NDH-1 is composed of 14 different subunits. Subunits NuoA, H, J, K, L, M, N constitute the membrane sector of the complex.

Its subcellular location is the cell inner membrane. The enzyme catalyses a quinone + NADH + 5 H(+)(in) = a quinol + NAD(+) + 4 H(+)(out). Its function is as follows. NDH-1 shuttles electrons from NADH, via FMN and iron-sulfur (Fe-S) centers, to quinones in the respiratory chain. The immediate electron acceptor for the enzyme in this species is believed to be ubiquinone. Couples the redox reaction to proton translocation (for every two electrons transferred, four hydrogen ions are translocated across the cytoplasmic membrane), and thus conserves the redox energy in a proton gradient. This subunit may bind ubiquinone. The sequence is that of NADH-quinone oxidoreductase subunit H from Protochlamydia amoebophila (strain UWE25).